A 276-amino-acid chain; its full sequence is Lectin-like protein At3g16530 (276 aa).

The N-terminal stretch at 1 to 19 (MQIHKLCFLVLFLANAAFA) is a signal peptide. The tract at residues 20 to 270 (VKFNFDSFDG…RHDIWSWSFE (251 aa)) is legume-lectin like. 3 N-linked (GlcNAc...) asparagine glycosylation sites follow: N79, N129, and N196.

The protein belongs to the leguminous lectin family.

It is found in the secreted. The protein resides in the extracellular space. It localises to the apoplast. The sequence is that of Lectin-like protein At3g16530 from Arabidopsis thaliana (Mouse-ear cress).